Consider the following 164-residue polypeptide: Lipoprotein signal peptidase (164 aa).

4 helical membrane-spanning segments follow: residues 2-22 (MSLLTGTGLRWMWLAVFAIVL), 40-60 (VVITPFFNLVHVYNTGAAFSF), 70-90 (WLFSGLAIVISGVLAVAMAKA), and 99-119 (LAYSLVIGGAIGNLIDRVVYG). Active-site residues include Asp-123 and Asp-142. Residues 138 to 158 (FNVADMAISCGAVFIILDGFI) form a helical membrane-spanning segment.

It belongs to the peptidase A8 family.

It localises to the cell inner membrane. The catalysed reaction is Release of signal peptides from bacterial membrane prolipoproteins. Hydrolyzes -Xaa-Yaa-Zaa-|-(S,diacylglyceryl)Cys-, in which Xaa is hydrophobic (preferably Leu), and Yaa (Ala or Ser) and Zaa (Gly or Ala) have small, neutral side chains.. It participates in protein modification; lipoprotein biosynthesis (signal peptide cleavage). In terms of biological role, this protein specifically catalyzes the removal of signal peptides from prolipoproteins. The chain is Lipoprotein signal peptidase from Tolumonas auensis (strain DSM 9187 / NBRC 110442 / TA 4).